The chain runs to 210 residues: Imidazoleglycerol-phosphate dehydratase (210 aa).

The protein belongs to the imidazoleglycerol-phosphate dehydratase family.

It carries out the reaction D-erythro-1-(imidazol-4-yl)glycerol 3-phosphate = 3-(imidazol-4-yl)-2-oxopropyl phosphate + H2O. The protein operates within amino-acid biosynthesis; L-histidine biosynthesis; L-histidine from 5-phospho-alpha-D-ribose 1-diphosphate: step 6/9. The chain is Imidazoleglycerol-phosphate dehydratase (HIS3) from Candida glabrata (strain ATCC 2001 / BCRC 20586 / JCM 3761 / NBRC 0622 / NRRL Y-65 / CBS 138) (Yeast).